A 767-amino-acid chain; its full sequence is MATYLEFIQQNEERDGVRFSWNVWPSSRLEATRMVVPLACLLTPLKERPDLPPVQYEPVLCSRPTCKAVLNPLCQVDYRAKLWACNFCFQRNQFPPAYGGISEVNQPAELMPQFSTIEYVIQRGAQSPLIFLYVVDTCLEEDDLQALKESLQMSLSLLPPDALVGLITFGRMVQVHELSCEGISKSYVFRGTKDLTAKQIQDMLGLTKPAMPMQQARPAQPQEHPFASSRFLQPVHKIDMNLTDLLGELQRDPWPVTQGKRPLRSTGVALSIAVGLLEGTFPNTGARIMLFTGGPPTQGPGMVVGDELKIPIRSWHDIEKDNARFMKKATKHYEMLANRTAANGHCIDIYACALDQTGLLEMKCCANLTGGYMVMGDSFNTSLFKQTFQRIFTKDFNGDFRMAFGATLDVKTSRELKIAGAIGPCVSLNVKGPCVSENELGVGGTSQWKICGLDPTSTLGIYFEVVNQHNTPIPQGGRGAIQFVTHYQHSSTQRRIRVTTIARNWADVQSQLRHIEAAFDQEAAAVLMARLGVFRAESEEGPDVLRWLDRQLIRLCQKFGQYNKEDPTSFRLSDSFSLYPQFMFHLRRSPFLQVFNNSPDESSYYRHHFARQDLTQSLIMIQPILYSYSFHGPPEPVLLDSSSILADRILLMDTFFQIVIYLGETIAQWRKAGYQDMPEYENFKHLLQAPLDDAQEILQARFPMPRYINTEHGGSQARFLLSKVNPSQTHNNLYAWGQETGAPILTDDVSLQVFMDHLKKLAVSSAC.

An N-acetylalanine modification is found at A2. Zn(2+)-binding residues include C61, C66, C85, and C88. K564 bears the N6-acetyllysine mark. A Gelsolin-like repeat occupies P634 to L720.

Belongs to the SEC23/SEC24 family. SEC23 subfamily. COPII is composed of at least five proteins: the Sec23/24 complex, the Sec13/31 complex and Sar1. Interacts with SAR1A. In terms of tissue distribution, ubiquitously expressed.

Its subcellular location is the cytoplasmic vesicle. The protein localises to the COPII-coated vesicle membrane. It localises to the endoplasmic reticulum membrane. The protein resides in the cytoplasm. It is found in the cytosol. Its function is as follows. Component of the coat protein complex II (COPII) which promotes the formation of transport vesicles from the endoplasmic reticulum (ER). The coat has two main functions, the physical deformation of the endoplasmic reticulum membrane into vesicles and the selection of cargo molecules for their transport to the Golgi complex. This is Protein transport protein Sec23B from Homo sapiens (Human).